Consider the following 1443-residue polypeptide: Lysophospholipase NTE1 (1443 aa).

The Lumenal segment spans residues M1–N59. Residues L60–V80 traverse the membrane as a helical segment. Over R81–M1443 the chain is Cytoplasmic. The span at A103 to G118 shows a compositional bias: polar residues. 2 disordered regions span residues A103–E122 and K199–H251. The segment covering E210–V235 has biased composition (acidic residues). A nucleoside 3',5'-cyclic phosphate is bound by residues L619–L750 and K746–K871. Residues L1136–K1300 form the PNPLA domain. The GXGXXG motif lies at G1140 to G1145. Residues G1167 to G1171 carry the GXSXG motif. The active-site Nucleophile is the S1169. The active-site Proton acceptor is D1287. A DGA/G motif is present at residues D1287–G1289.

It belongs to the NTE family.

It is found in the endoplasmic reticulum membrane. It carries out the reaction a 1-acyl-sn-glycero-3-phosphocholine + H2O = sn-glycerol 3-phosphocholine + a fatty acid + H(+). With respect to regulation, inhibited by organophosphorus esters. Functionally, intracellular phospholipase B that catalyzes the double deacylation of phosphatidylcholine (PC) to glycerophosphocholine (GroPCho). Plays an important role in membrane lipid homeostasis. Responsible for the rapid PC turnover in response to inositol, elevated temperatures, or when choline is present in the growth medium. This chain is Lysophospholipase NTE1 (NTE1), found in Lodderomyces elongisporus (strain ATCC 11503 / CBS 2605 / JCM 1781 / NBRC 1676 / NRRL YB-4239) (Yeast).